We begin with the raw amino-acid sequence, 80 residues long: Cytochrome c oxidase subunit 7B, mitochondrial (80 aa).

The transit peptide at 1–24 (MLPLAKNALSRLQVRSIQQVVARQ) directs the protein to the mitochondrion. Topologically, residues 25 to 32 (SHQKKTPT) are mitochondrial matrix. The chain crosses the membrane as a helical span at residues 33–59 (FHDKYGNAVLAGGSIFCISAWTYTATQ). The Mitochondrial intermembrane segment spans residues 60-80 (IGIEWNLSPVGRVTPKEWRDQ).

It belongs to the cytochrome c oxidase VIIb family. In terms of assembly, component of the cytochrome c oxidase (complex IV, CIV), a multisubunit enzyme composed of 14 subunits. The complex is composed of a catalytic core of 3 subunits MT-CO1, MT-CO2 and MT-CO3, encoded in the mitochondrial DNA, and 11 supernumerary subunits COX4I, COX5A, COX5B, COX6A, COX6B, COX6C, COX7A, COX7B, COX7C, COX8 and NDUFA4, which are encoded in the nuclear genome. The complex exists as a monomer or a dimer and forms supercomplexes (SCs) in the inner mitochondrial membrane with NADH-ubiquinone oxidoreductase (complex I, CI) and ubiquinol-cytochrome c oxidoreductase (cytochrome b-c1 complex, complex III, CIII), resulting in different assemblies (supercomplex SCI(1)III(2)IV(1) and megacomplex MCI(2)III(2)IV(2)).

Its subcellular location is the mitochondrion inner membrane. Its pathway is energy metabolism; oxidative phosphorylation. In terms of biological role, component of the cytochrome c oxidase, the last enzyme in the mitochondrial electron transport chain which drives oxidative phosphorylation. The respiratory chain contains 3 multisubunit complexes succinate dehydrogenase (complex II, CII), ubiquinol-cytochrome c oxidoreductase (cytochrome b-c1 complex, complex III, CIII) and cytochrome c oxidase (complex IV, CIV), that cooperate to transfer electrons derived from NADH and succinate to molecular oxygen, creating an electrochemical gradient over the inner membrane that drives transmembrane transport and the ATP synthase. Cytochrome c oxidase is the component of the respiratory chain that catalyzes the reduction of oxygen to water. Electrons originating from reduced cytochrome c in the intermembrane space (IMS) are transferred via the dinuclear copper A center (CU(A)) of subunit 2 and heme A of subunit 1 to the active site in subunit 1, a binuclear center (BNC) formed by heme A3 and copper B (CU(B)). The BNC reduces molecular oxygen to 2 water molecules using 4 electrons from cytochrome c in the IMS and 4 protons from the mitochondrial matrix. Plays a role in proper central nervous system (CNS) development in vertebrates. The protein is Cytochrome c oxidase subunit 7B, mitochondrial (Cox7b) of Rattus norvegicus (Rat).